The sequence spans 466 residues: MALRFYNTLSQQVEEFTPASDNTVRMYTCGPTVYDFAHIGNFRTFTFVDLLRKVLRANGFQLNHVMNITDVDDKIIRNAVAQHQSLEQYTKIYTEAFLEDCKMLRLERPERIAPATEHIHDMVSAIERLGDSQHTYASDGSVYFKIASFPGYGKLSHNDFSGNLAGARVDVDEYEKADARDFALWKTPKEGEPFWDTTIGPGRPGWHIECSVMAIKYLGETLDIHAGGIDLVFPHHENEIAQSESLTGKLFSRFWLHAEFLMVEGQKMSKSLGNYYTLRDLVAKGYEPESIRYLLASVPYRKSLNFTLDGLKAARIAIERLRNFKRRLETEPFAEGLSAILAERTAQASQAFIGGLNEDLNTAEALASVFEYVRDLNSAMDSGEFRAGNTTAALEFLARFDSIFDVLKPTAKAGELSDAEIDAQIAARAAAKKSRDFALADQIRDQLLAQGIILEDTKSGVRWKRK.

Cys-29 contacts Zn(2+). A 'HIGH' region motif is present at residues 31 to 41 (PTVYDFAHIGN). The Zn(2+) site is built by Cys-210, His-235, and Glu-239. The 'KMSKS' region signature appears at 267–271 (KMSKS). Lys-270 is an ATP binding site.

Belongs to the class-I aminoacyl-tRNA synthetase family. As to quaternary structure, monomer. Requires Zn(2+) as cofactor.

It is found in the cytoplasm. The catalysed reaction is tRNA(Cys) + L-cysteine + ATP = L-cysteinyl-tRNA(Cys) + AMP + diphosphate. This Solibacter usitatus (strain Ellin6076) protein is Cysteine--tRNA ligase.